An 87-amino-acid chain; its full sequence is Gibberellin-regulated protein 8 (87 aa).

The first 25 residues, 1 to 25 (MKLVVVQFFIISLLLTSSFSVLSSA), serve as a signal peptide directing secretion.

This sequence belongs to the GASA family. Six disulfide bonds may be present. As to expression, expressed in roots and developing seeds.

The protein localises to the secreted. Its function is as follows. Gibberellin-regulated protein that may function in hormonal controlled steps of development such as seed germination, flowering and seed maturation. This is Gibberellin-regulated protein 8 from Arabidopsis thaliana (Mouse-ear cress).